A 634-amino-acid polypeptide reads, in one-letter code: MYDLLKTIDDPADLRRLDRRQLQPLADELRAFVLDSVSKTGGHLSSNLGTVELTIALHYVFNTPNDRIVWDVGHQTYPHKILTGRRDQMHSLRQYDGISGFPRRSESEYDTFGTAHSSTSISAALGMAIGSQLNGDDRFSIAVIGDGAMTAGMAFEAMNNAGVSEDAKLLVILNDNDMSISPPVGALNRHLARLMSGRFYAAARAGVERVLSVAPPVLELARKLEEHAKGMVVPATLFEEFGFNYIGPIDGHDLDSLIPTLQNIRELRGPQFLHVVTKKGQGYKLAEADPVLYHGPGKFNPAEGIKPSTTPAKKTYTQVFGEWLCDEAERDTRVVGITPAMREGSGMVEFEKRFKDRYYDVGIAEQHAVTFAGGLATEGLKPVVAIYSTFLQRAYDQLIHDVALQNLPVVFAIDRAGLVGADGATHAGAYDLAFMRCIPNMTIMAASDENECRQMLHTALQQPNPTAVRYPRGAGTGVATVKEFTEIPLGKGEVRRRTSQPEGKRVAILAFGTMVAPSLAAAEELDATVANMRFVKPVDAALVRELAETHDYVVTVEEGCVMGGAGSACVEALMESGVIRPVLQLGLPDLFIDHGDPAKLLSQCGLDGAGIAKSIRERFLNPAADVAGQAKRVA.

Thiamine diphosphate is bound by residues His-74 and 115-117 (AHS). A Mg(2+)-binding site is contributed by Asp-146. Thiamine diphosphate-binding positions include 147–148 (GA), Asn-176, Tyr-283, and Glu-365. Asn-176 contributes to the Mg(2+) binding site.

The protein belongs to the transketolase family. DXPS subfamily. In terms of assembly, homodimer. Requires Mg(2+) as cofactor. Thiamine diphosphate is required as a cofactor.

The catalysed reaction is D-glyceraldehyde 3-phosphate + pyruvate + H(+) = 1-deoxy-D-xylulose 5-phosphate + CO2. It participates in metabolic intermediate biosynthesis; 1-deoxy-D-xylulose 5-phosphate biosynthesis; 1-deoxy-D-xylulose 5-phosphate from D-glyceraldehyde 3-phosphate and pyruvate: step 1/1. Its function is as follows. Catalyzes the acyloin condensation reaction between C atoms 2 and 3 of pyruvate and glyceraldehyde 3-phosphate to yield 1-deoxy-D-xylulose-5-phosphate (DXP). This Burkholderia cenocepacia (strain ATCC BAA-245 / DSM 16553 / LMG 16656 / NCTC 13227 / J2315 / CF5610) (Burkholderia cepacia (strain J2315)) protein is 1-deoxy-D-xylulose-5-phosphate synthase.